Here is a 117-residue protein sequence, read N- to C-terminus: Immunoglobulin heavy variable 1-69 (117 aa).

Residues 1-19 form the signal peptide; the sequence is MDWTWRFLFVVAAATGVQS. Gln-20 is modified (pyrrolidone carboxylic acid). A framework-1 region spans residues 20-44; sequence QVQLVQSGAEVKKPGSSVKVSCKAS. An Ig-like domain is found at 20–117; it reads QVQLVQSGAE…EDTAVYYCAR (98 aa). Residues Cys-41 and Cys-115 are joined by a disulfide bond. Positions 45–52 are complementarity-determining-1; sequence GGTFSSYA. The segment at 53 to 69 is framework-2; that stretch reads ISWVRQAPGQGLEWMGG. The segment at 70-77 is complementarity-determining-2; that stretch reads IIPIFGTA. The framework-3 stretch occupies residues 78 to 115; it reads NYAQKFQGRVTITADKSTSTAYMELSSLRSEDTAVYYC. The tract at residues 116–117 is complementarity-determining-3; that stretch reads AR.

In terms of assembly, immunoglobulins are composed of two identical heavy chains and two identical light chains; disulfide-linked.

The protein resides in the secreted. It localises to the cell membrane. Its function is as follows. V region of the variable domain of immunoglobulin heavy chains that participates in the antigen recognition. Immunoglobulins, also known as antibodies, are membrane-bound or secreted glycoproteins produced by B lymphocytes. In the recognition phase of humoral immunity, the membrane-bound immunoglobulins serve as receptors which, upon binding of a specific antigen, trigger the clonal expansion and differentiation of B lymphocytes into immunoglobulins-secreting plasma cells. Secreted immunoglobulins mediate the effector phase of humoral immunity, which results in the elimination of bound antigens. The antigen binding site is formed by the variable domain of one heavy chain, together with that of its associated light chain. Thus, each immunoglobulin has two antigen binding sites with remarkable affinity for a particular antigen. The variable domains are assembled by a process called V-(D)-J rearrangement and can then be subjected to somatic hypermutations which, after exposure to antigen and selection, allow affinity maturation for a particular antigen. This Homo sapiens (Human) protein is Immunoglobulin heavy variable 1-69.